The chain runs to 146 residues: Small ribosomal subunit protein uS5 (146 aa).

An S5 DRBM domain is found at Phe8 to Val71.

The protein belongs to the universal ribosomal protein uS5 family. As to quaternary structure, part of the 30S ribosomal subunit. Contacts proteins S4 and S8.

Its function is as follows. With S4 and S12 plays an important role in translational accuracy. Located at the back of the 30S subunit body where it stabilizes the conformation of the head with respect to the body. The polypeptide is Small ribosomal subunit protein uS5 (Sulfurimonas denitrificans (strain ATCC 33889 / DSM 1251) (Thiomicrospira denitrificans (strain ATCC 33889 / DSM 1251))).